The chain runs to 64 residues: DNA-binding protein 7d (64 aa).

Residues Lys5, Lys7, Lys61, Lys63, and Lys64 each carry the N6-methyllysine modification.

This sequence belongs to the 7 kDa DNA-binding/endoribonuclease P2 family. As to quaternary structure, monomer.

The protein resides in the cytoplasm. In terms of biological role, can constrain negative DNA supercoils. May be involved in maintaining the integrity of the genome at high temperature. Stimulates the Holliday junction cleavage activity of Hjc. The chain is DNA-binding protein 7d (sso7d) from Saccharolobus solfataricus (strain ATCC 35092 / DSM 1617 / JCM 11322 / P2) (Sulfolobus solfataricus).